The chain runs to 597 residues: Golgin subfamily A member 8C (597 aa).

2 disordered regions span residues 1 to 80 (MAEE…VPDS) and 96 to 120 (KQQK…QKAE). The span at 38 to 50 (TNGSIHETATSGG) shows a compositional bias: polar residues. The span at 53 to 70 (SPGDSSSTSSSLHAPQSP) shows a compositional bias: low complexity. Coiled-coil stretches lie at residues 81-141 (RSVK…NTDL), 199-255 (EWKL…SQEV), and 296-394 (SEVE…GKRL). Basic and acidic residues predominate over residues 100–120 (KQVEHQLEEEKKANNEKQKAE). 3 disordered regions span residues 390–422 (LGKR…SGFM), 457–498 (PITK…GVAA), and 549–576 (PVQG…QEHP). Gly residues predominate over residues 470-483 (PGGGHHQAGPGQGG). Residues 553-563 (ETREGSPHDKP) show a composition bias toward basic and acidic residues.

It belongs to the GOLGA8 family.

The sequence is that of Golgin subfamily A member 8C (GOLGA8CP) from Homo sapiens (Human).